A 434-amino-acid polypeptide reads, in one-letter code: UDP-N-acetylmuramate--L-alanine ligase (434 aa).

108–114 (GSHGKTT) contacts ATP.

Belongs to the MurCDEF family.

It localises to the cytoplasm. It carries out the reaction UDP-N-acetyl-alpha-D-muramate + L-alanine + ATP = UDP-N-acetyl-alpha-D-muramoyl-L-alanine + ADP + phosphate + H(+). Its pathway is cell wall biogenesis; peptidoglycan biosynthesis. Functionally, cell wall formation. The polypeptide is UDP-N-acetylmuramate--L-alanine ligase (Geobacillus kaustophilus (strain HTA426)).